We begin with the raw amino-acid sequence, 200 residues long: 3-isopropylmalate dehydratase small subunit (200 aa).

The protein belongs to the LeuD family. LeuD type 1 subfamily. In terms of assembly, heterodimer of LeuC and LeuD.

The catalysed reaction is (2R,3S)-3-isopropylmalate = (2S)-2-isopropylmalate. It functions in the pathway amino-acid biosynthesis; L-leucine biosynthesis; L-leucine from 3-methyl-2-oxobutanoate: step 2/4. Catalyzes the isomerization between 2-isopropylmalate and 3-isopropylmalate, via the formation of 2-isopropylmaleate. The protein is 3-isopropylmalate dehydratase small subunit of Actinobacillus pleuropneumoniae serotype 3 (strain JL03).